The sequence spans 617 residues: Proline--tRNA ligase (617 aa).

This sequence belongs to the class-II aminoacyl-tRNA synthetase family. ProS type 1 subfamily. In terms of assembly, homodimer.

The protein resides in the cytoplasm. The enzyme catalyses tRNA(Pro) + L-proline + ATP = L-prolyl-tRNA(Pro) + AMP + diphosphate. In terms of biological role, catalyzes the attachment of proline to tRNA(Pro) in a two-step reaction: proline is first activated by ATP to form Pro-AMP and then transferred to the acceptor end of tRNA(Pro). As ProRS can inadvertently accommodate and process non-cognate amino acids such as alanine and cysteine, to avoid such errors it has two additional distinct editing activities against alanine. One activity is designated as 'pretransfer' editing and involves the tRNA(Pro)-independent hydrolysis of activated Ala-AMP. The other activity is designated 'posttransfer' editing and involves deacylation of mischarged Ala-tRNA(Pro). The misacylated Cys-tRNA(Pro) is not edited by ProRS. This chain is Proline--tRNA ligase, found in Streptococcus agalactiae serotype Ia (strain ATCC 27591 / A909 / CDC SS700).